Reading from the N-terminus, the 347-residue chain is GMP reductase (347 aa).

108-131 provides a ligand contact to NADP(+); it reads AEFEKVKKIMALSEEFVFICIDIA. The K(+) site is built by Gly181 and Gly183. The Thioimidate intermediate role is filled by Cys186. 216-239 contacts NADP(+); that stretch reads IIGDGGCSCAGDVSKAFGGGADFV.

The protein belongs to the IMPDH/GMPR family. GuaC type 1 subfamily. In terms of assembly, homotetramer.

The enzyme catalyses IMP + NH4(+) + NADP(+) = GMP + NADPH + 2 H(+). Its function is as follows. Catalyzes the irreversible NADPH-dependent deamination of GMP to IMP. It functions in the conversion of nucleobase, nucleoside and nucleotide derivatives of G to A nucleotides, and in maintaining the intracellular balance of A and G nucleotides. The sequence is that of GMP reductase from Vibrio atlanticus (strain LGP32) (Vibrio splendidus (strain Mel32)).